The following is a 343-amino-acid chain: Phospholipid phosphatase-related protein type 2 (343 aa).

3 consecutive transmembrane segments (helical) span residues 12–32 (FSII…VILL), 69–89 (VPPA…ILLG), and 129–149 (FLGV…AGQV). Asparagine 165 carries N-linked (GlcNAc...) asparagine glycosylation. 3 helical membrane-spanning segments follow: residues 210 to 230 (AALC…VFRV), 239 to 259 (SLCL…VAEY), and 266 to 286 (VLAG…CVVH). Positions 290 to 343 (SRPPSGRRLSPWEDLGQAPTMDSPLEKNPRSAGRIRHRHGSPHPSRRTAPAVAT) are disordered. Phosphoserine is present on residues serine 299 and serine 312. Positions 322–335 (GRIRHRHGSPHPSR) are enriched in basic residues.

The protein belongs to the PA-phosphatase related phosphoesterase family.

It is found in the membrane. In Homo sapiens (Human), this protein is Phospholipid phosphatase-related protein type 2.